A 325-amino-acid chain; its full sequence is Glucosyl-3-phosphoglycerate synthase (325 aa).

UDP-alpha-D-glucose-binding positions include 37-41, Ser-71, Lys-104, and 124-125; these read PSLNE and DS. Asp-126 is a Mn(2+) binding site. Residue 171 to 174 coordinates (2R)-3-phosphoglycerate; the sequence is GRVT. UDP-alpha-D-glucose-binding positions include 216 to 219 and 243 to 248; these read YGVE and RIHDNQ. A Mn(2+)-binding site is contributed by His-245. Asn-247 contacts (2R)-3-phosphoglycerate.

The protein belongs to the glycosyltransferase 2 family. In terms of assembly, homodimer in solution. Co(2+) is required as a cofactor. Requires Mg(2+) as cofactor. The cofactor is Mn(2+). It depends on Ni(2+) as a cofactor. Zn(2+) serves as cofactor.

The catalysed reaction is an NDP-alpha-D-glucose + (2R)-3-phosphoglycerate = (2R)-2-O-(alpha-D-glucopyranosyl)-3-phospho-glycerate + a ribonucleoside 5'-diphosphate + H(+). It carries out the reaction (2R)-3-phosphoglycerate + UDP-alpha-D-glucose = (2R)-2-O-(alpha-D-glucopyranosyl)-3-phospho-glycerate + UDP + H(+). It catalyses the reaction ADP-alpha-D-glucose + (2R)-3-phosphoglycerate = (2R)-2-O-(alpha-D-glucopyranosyl)-3-phospho-glycerate + ADP + H(+). Inhibited by ADP and EDTA. In terms of biological role, involved in the biosynthesis of the compatible solute mannosylglucosylglycerate through a phosphorylating pathway. Catalyzes the transfer of the glucose moiety from a nuleotide sugar such as UDP-alpha-D-glucose to the position 2 of 3-phospho-D-glycerate (3-PGA) to form glucosyl-3-phosphoglycerate (GPG). UDP-glucose is the preferred substrate, but it can be partially replaced by ADP-glucose. In Petrotoga mobilis (strain DSM 10674 / SJ95), this protein is Glucosyl-3-phosphoglycerate synthase.